A 137-amino-acid chain; its full sequence is Protein cornichon homolog 4 (137 aa).

3 helical membrane passes run 8–28 (LISFFFLIALVGIIVYQLVCL), 53–73 (FIVQGVLCVFYLLTGHWFMTL), and 113–133 (LAYIVLNLFLTIFWMIYSALD).

This sequence belongs to the cornichon family.

It is found in the membrane. The sequence is that of Protein cornichon homolog 4 from Arabidopsis thaliana (Mouse-ear cress).